Here is an 847-residue protein sequence, read N- to C-terminus: Pep5-like zinc finger protein C16A10.03c (847 aa).

The stretch at 387–526 (YIEAIPFSDS…GIWLFNSDPM (140 aa)) is one CHCR repeat. Residues 780–814 (CDNCEGLLDVPFVSYSCLHLVHRDCATETVCPKCK) form an RING-type; atypical zinc finger.

Its subcellular location is the cytoplasm. The protein resides in the nucleus. This is Pep5-like zinc finger protein C16A10.03c from Schizosaccharomyces pombe (strain 972 / ATCC 24843) (Fission yeast).